Reading from the N-terminus, the 332-residue chain is Glyceraldehyde-3-phosphate dehydrogenase (332 aa).

Residues 10–11 (RI), aspartate 36, lysine 81, and serine 116 contribute to the NAD(+) site. Residues 150–152 (SCT), threonine 181, arginine 197, 210–211 (TK), and arginine 233 each bind D-glyceraldehyde 3-phosphate. The active-site Nucleophile is the cysteine 151. Asparagine 314 serves as a coordination point for NAD(+).

Belongs to the glyceraldehyde-3-phosphate dehydrogenase family. In terms of assembly, homotetramer.

It is found in the cytoplasm. It catalyses the reaction D-glyceraldehyde 3-phosphate + phosphate + NAD(+) = (2R)-3-phospho-glyceroyl phosphate + NADH + H(+). The protein operates within carbohydrate degradation; glycolysis; pyruvate from D-glyceraldehyde 3-phosphate: step 1/5. Its function is as follows. Catalyzes the oxidative phosphorylation of glyceraldehyde 3-phosphate (G3P) to 1,3-bisphosphoglycerate (BPG) using the cofactor NAD. The first reaction step involves the formation of a hemiacetal intermediate between G3P and a cysteine residue, and this hemiacetal intermediate is then oxidized to a thioester, with concomitant reduction of NAD to NADH. The reduced NADH is then exchanged with the second NAD, and the thioester is attacked by a nucleophilic inorganic phosphate to produce BPG. This chain is Glyceraldehyde-3-phosphate dehydrogenase (gapA), found in Helicobacter pylori (strain J99 / ATCC 700824) (Campylobacter pylori J99).